The chain runs to 148 residues: Macrodomain Ter protein (148 aa).

The protein belongs to the MatP family. In terms of assembly, homodimer.

It is found in the cytoplasm. Functionally, required for spatial organization of the terminus region of the chromosome (Ter macrodomain) during the cell cycle. Prevents early segregation of duplicated Ter macrodomains during cell division. Binds specifically to matS, which is a 13 bp signature motif repeated within the Ter macrodomain. This Aliivibrio salmonicida (strain LFI1238) (Vibrio salmonicida (strain LFI1238)) protein is Macrodomain Ter protein.